Here is a 158-residue protein sequence, read N- to C-terminus: Transcription elongation factor GreA (158 aa).

Residues E47–A75 are a coiled coil.

It belongs to the GreA/GreB family.

Necessary for efficient RNA polymerase transcription elongation past template-encoded arresting sites. The arresting sites in DNA have the property of trapping a certain fraction of elongating RNA polymerases that pass through, resulting in locked ternary complexes. Cleavage of the nascent transcript by cleavage factors such as GreA or GreB allows the resumption of elongation from the new 3'terminus. GreA releases sequences of 2 to 3 nucleotides. The protein is Transcription elongation factor GreA of Oceanobacillus iheyensis (strain DSM 14371 / CIP 107618 / JCM 11309 / KCTC 3954 / HTE831).